Consider the following 569-residue polypeptide: Putative ABC transporter ATP-binding protein TTE1589 (569 aa).

ABC transporter domains are found at residues I8 to M248 and I309 to K542. Residues G43–S50 and G342–T349 each bind ATP.

It belongs to the ABC transporter superfamily.

It localises to the cell membrane. Its function is as follows. Probably part of an ABC transporter complex. Responsible for energy coupling to the transport system. In Caldanaerobacter subterraneus subsp. tengcongensis (strain DSM 15242 / JCM 11007 / NBRC 100824 / MB4) (Thermoanaerobacter tengcongensis), this protein is Putative ABC transporter ATP-binding protein TTE1589.